Consider the following 168-residue polypeptide: Chorismate pyruvate-lyase (168 aa).

4 residues coordinate substrate: Met36, Arg78, Leu116, and Glu157.

This sequence belongs to the UbiC family. As to quaternary structure, monomer.

The protein localises to the cytoplasm. It catalyses the reaction chorismate = 4-hydroxybenzoate + pyruvate. Its pathway is cofactor biosynthesis; ubiquinone biosynthesis. Removes the pyruvyl group from chorismate, with concomitant aromatization of the ring, to provide 4-hydroxybenzoate (4HB) for the ubiquinone pathway. This chain is Chorismate pyruvate-lyase, found in Photorhabdus laumondii subsp. laumondii (strain DSM 15139 / CIP 105565 / TT01) (Photorhabdus luminescens subsp. laumondii).